The following is a 290-amino-acid chain: Nucleotide-binding protein Xfasm12_0753 (290 aa).

13 to 20 contacts ATP; it reads GLSGSGKS. 65–68 contributes to the GTP binding site; that stretch reads DIRS.

The protein belongs to the RapZ-like family.

Functionally, displays ATPase and GTPase activities. The polypeptide is Nucleotide-binding protein Xfasm12_0753 (Xylella fastidiosa (strain M12)).